The primary structure comprises 177 residues: Large ribosomal subunit protein uL6 (177 aa).

This sequence belongs to the universal ribosomal protein uL6 family. Part of the 50S ribosomal subunit.

In terms of biological role, this protein binds to the 23S rRNA, and is important in its secondary structure. It is located near the subunit interface in the base of the L7/L12 stalk, and near the tRNA binding site of the peptidyltransferase center. The polypeptide is Large ribosomal subunit protein uL6 (Acinetobacter baylyi (strain ATCC 33305 / BD413 / ADP1)).